The sequence spans 248 residues: Phosphoribosyl isomerase A (248 aa).

Asp-14 functions as the Proton acceptor in the catalytic mechanism. The active-site Proton donor is Asp-133.

Belongs to the HisA/HisF family.

The protein localises to the cytoplasm. The catalysed reaction is 1-(5-phospho-beta-D-ribosyl)-5-[(5-phospho-beta-D-ribosylamino)methylideneamino]imidazole-4-carboxamide = 5-[(5-phospho-1-deoxy-D-ribulos-1-ylimino)methylamino]-1-(5-phospho-beta-D-ribosyl)imidazole-4-carboxamide. It carries out the reaction N-(5-phospho-beta-D-ribosyl)anthranilate = 1-(2-carboxyphenylamino)-1-deoxy-D-ribulose 5-phosphate. The protein operates within amino-acid biosynthesis; L-histidine biosynthesis; L-histidine from 5-phospho-alpha-D-ribose 1-diphosphate: step 4/9. It participates in amino-acid biosynthesis; L-tryptophan biosynthesis; L-tryptophan from chorismate: step 3/5. Functionally, involved in both the histidine and tryptophan biosynthetic pathways. This chain is Phosphoribosyl isomerase A, found in Mycobacterium sp. (strain JLS).